A 361-amino-acid chain; its full sequence is Chalcone synthase A (361 aa).

Cysteine 168 is a catalytic residue.

It belongs to the thiolase-like superfamily. Chalcone/stilbene synthases family.

It carries out the reaction (E)-4-coumaroyl-CoA + 3 malonyl-CoA + 3 H(+) = 2',4,4',6'-tetrahydroxychalcone + 3 CO2 + 4 CoA. The protein operates within secondary metabolite biosynthesis; flavonoid biosynthesis. Its function is as follows. The primary product of this enzyme is 4,2',4',6'-tetrahydroxychalcone (also termed naringenin-chalcone or chalcone) which can under specific conditions spontaneously isomerize into naringenin. This chain is Chalcone synthase A (CHSA), found in Ipomoea cordatotriloba (Tievine).